The primary structure comprises 552 residues: Outer dynein arm protein 1 (552 aa).

Residues 1–27 (MPSADATRGGGSAGSMGKGTLGAGDTL) are disordered. Residues 8-22 (RGGGSAGSMGKGTLG) show a composition bias toward gly residues. Coiled-coil stretches lie at residues 28-59 (GHKS…LENK), 120-260 (SAKE…QELL), and 331-395 (TLFN…YEKR). 2 disordered regions span residues 482 to 515 (NRII…TREH) and 528 to 552 (LETA…PTRR). Residues 493–506 (QEEEVEGLEPEPVE) are compositionally biased toward acidic residues.

Belongs to the ODA1/DCC2 family. Component of the outer dynein arm complex.

It is found in the cytoplasm. The protein localises to the cytoskeleton. It localises to the cilium axoneme. In terms of biological role, component of the outer dynein arm complex required for assembly of the outer dynein arm-docking complex (ODA-DC) and the outer dynein arm onto the doublet microtubule. This Chlamydomonas reinhardtii (Chlamydomonas smithii) protein is Outer dynein arm protein 1 (ODA1).